Reading from the N-terminus, the 237-residue chain is Phosphoribosylaminoimidazole-succinocarboxamide synthase (237 aa).

Belongs to the SAICAR synthetase family.

It carries out the reaction 5-amino-1-(5-phospho-D-ribosyl)imidazole-4-carboxylate + L-aspartate + ATP = (2S)-2-[5-amino-1-(5-phospho-beta-D-ribosyl)imidazole-4-carboxamido]succinate + ADP + phosphate + 2 H(+). Its pathway is purine metabolism; IMP biosynthesis via de novo pathway; 5-amino-1-(5-phospho-D-ribosyl)imidazole-4-carboxamide from 5-amino-1-(5-phospho-D-ribosyl)imidazole-4-carboxylate: step 1/2. This is Phosphoribosylaminoimidazole-succinocarboxamide synthase from Listeria monocytogenes serovar 1/2a (strain ATCC BAA-679 / EGD-e).